The following is a 138-amino-acid chain: Glutathione S-transferase Mu 5 (138 aa).

Phosphoserine is present on S1. Positions 1 to 71 constitute a GST N-terminal domain; that stretch reads SMVLGYWDIR…KITQSNAILR (71 aa). Glutathione contacts are provided by residues 6 to 7, 39 to 43, 52 to 53, and 65 to 66; these read YW, WLDVK, NL, and QS. The region spanning 72-135 is the GST C-terminal domain; it reads IRVDIMENQI…FMCRCFKMPI (64 aa).

This sequence belongs to the GST superfamily. Mu family. Homodimer.

The protein localises to the cytoplasm. The enzyme catalyses RX + glutathione = an S-substituted glutathione + a halide anion + H(+). Conjugation of reduced glutathione to a wide number of exogenous and endogenous hydrophobic electrophiles. The sequence is that of Glutathione S-transferase Mu 5 from Mesocricetus auratus (Golden hamster).